The sequence spans 844 residues: Translation initiation factor IF-2 (844 aa).

Residues 120 to 132 (RNSVNLVQPQQEK) are compositionally biased toward polar residues. Positions 120–220 (RNSVNLVQPQ…SGKGFKKANP (101 aa)) are disordered. A compositionally biased stretch (basic and acidic residues) spans 161–175 (DEEKSSEDKSTESKN). The span at 205–219 (SKAKKASGKGFKKAN) shows a compositional bias: basic residues. The region spanning 343–510 (SRAPVVTIMG…AVLLQSEVLE (168 aa)) is the tr-type G domain. The tract at residues 352-359 (GHVDHGKT) is G1. A GTP-binding site is contributed by 352 to 359 (GHVDHGKT). The segment at 377–381 (GITQH) is G2. Positions 398-401 (DTPG) are G3. GTP is bound by residues 398–402 (DTPGH) and 452–455 (NKID). The segment at 452–455 (NKID) is G4. The segment at 488–490 (SAK) is G5.

The protein belongs to the TRAFAC class translation factor GTPase superfamily. Classic translation factor GTPase family. IF-2 subfamily.

It localises to the cytoplasm. Its function is as follows. One of the essential components for the initiation of protein synthesis. Protects formylmethionyl-tRNA from spontaneous hydrolysis and promotes its binding to the 30S ribosomal subunits. Also involved in the hydrolysis of GTP during the formation of the 70S ribosomal complex. This is Translation initiation factor IF-2 from Francisella philomiragia subsp. philomiragia (strain ATCC 25017 / CCUG 19701 / FSC 153 / O#319-036).